A 510-amino-acid polypeptide reads, in one-letter code: Histidine ammonia-lyase (510 aa).

A cross-link (5-imidazolinone (Ala-Gly)) is located at residues 143–145; it reads ASG. Ser144 carries the 2,3-didehydroalanine (Ser) modification.

The protein belongs to the PAL/histidase family. Post-translationally, contains an active site 4-methylidene-imidazol-5-one (MIO), which is formed autocatalytically by cyclization and dehydration of residues Ala-Ser-Gly.

It localises to the cytoplasm. The catalysed reaction is L-histidine = trans-urocanate + NH4(+). It functions in the pathway amino-acid degradation; L-histidine degradation into L-glutamate; N-formimidoyl-L-glutamate from L-histidine: step 1/3. The polypeptide is Histidine ammonia-lyase (Aliivibrio fischeri (strain ATCC 700601 / ES114) (Vibrio fischeri)).